Reading from the N-terminus, the 492-residue chain is NADPH:adrenodoxin oxidoreductase, mitochondrial (492 aa).

The transit peptide at 1 to 32 directs the protein to the mitochondrion; it reads MAPRCWRWWPWSSWTRTRLPPSRSIQNFGQHF. Positions 49, 70, 78, and 114 each coordinate FAD. NADP(+)-binding positions include 185-188, 229-230, and E241; these read QGNV and RR. Residues S311 and S318 each carry the phosphoserine modification. Residues W399 and 406-408 each bind FAD; that span reads GVI. G406 contributes to the NADP(+) binding site.

Belongs to the ferredoxin--NADP reductase type 1 family. In terms of assembly, monomer. Interacts directly with FDX1. FAD serves as cofactor. As to expression, detected in adrenal cortex and corpus luteum (at protein level).

The protein localises to the mitochondrion inner membrane. It carries out the reaction 2 reduced [adrenodoxin] + NADP(+) + H(+) = 2 oxidized [adrenodoxin] + NADPH. It catalyses the reaction 2 reduced [2Fe-2S]-[ferredoxin] + NADP(+) + H(+) = 2 oxidized [2Fe-2S]-[ferredoxin] + NADPH. Its pathway is steroid metabolism; cholesterol metabolism. Serves as the first electron transfer protein in all the mitochondrial P450 systems including cholesterol side chain cleavage in all steroidogenic tissues, steroid 11-beta hydroxylation in the adrenal cortex, 25-OH-vitamin D3-24 hydroxylation in the kidney, and sterol C-27 hydroxylation in the liver. Also acts as a ferredoxin--NADP(+) reductase essential for coenzyme Q biosynthesis: together with FDX2, transfers the electrons required for the hydroxylation reaction performed by COQ6. The protein is NADPH:adrenodoxin oxidoreductase, mitochondrial (FDXR) of Bos taurus (Bovine).